The sequence spans 125 residues: Small ribosomal subunit protein uS13 (125 aa).

The segment at 90 to 125 (TRHRRGLPVRGQRTHTNARTKKGPRRAIAGKKKVTK) is disordered.

Belongs to the universal ribosomal protein uS13 family. In terms of assembly, part of the 30S ribosomal subunit. Forms a loose heterodimer with protein S19. Forms two bridges to the 50S subunit in the 70S ribosome.

Its function is as follows. Located at the top of the head of the 30S subunit, it contacts several helices of the 16S rRNA. In the 70S ribosome it contacts the 23S rRNA (bridge B1a) and protein L5 of the 50S subunit (bridge B1b), connecting the 2 subunits; these bridges are implicated in subunit movement. Contacts the tRNAs in the A and P-sites. This chain is Small ribosomal subunit protein uS13, found in Gemmatimonas aurantiaca (strain DSM 14586 / JCM 11422 / NBRC 100505 / T-27).